Reading from the N-terminus, the 325-residue chain is Eukaryotic translation initiation factor 3 subunit I (325 aa).

5 WD repeats span residues 8 to 47, 50 to 89, 144 to 183, 186 to 225, and 283 to 324; these read GHER…RLGT, GHTG…QLAL, CSES…VLKK, EHTK…HVKT, and GHFG…FELE.

The protein belongs to the eIF-3 subunit I family. Component of the eukaryotic translation initiation factor 3 (eIF-3) complex, which is composed of 13 subunits: eif3a, eif3b, eif3c, eif3d, eif3e, eif3f, eif3g, eif3h, eif3i, eif3j, eif3k, eif3l and eif3m.

The protein localises to the cytoplasm. Component of the eukaryotic translation initiation factor 3 (eIF-3) complex, which is involved in protein synthesis of a specialized repertoire of mRNAs and, together with other initiation factors, stimulates binding of mRNA and methionyl-tRNAi to the 40S ribosome. The eIF-3 complex specifically targets and initiates translation of a subset of mRNAs involved in cell proliferation. This chain is Eukaryotic translation initiation factor 3 subunit I (eif3i), found in Danio rerio (Zebrafish).